Consider the following 222-residue polypeptide: 7-cyano-7-deazaguanine synthase (222 aa).

Residue 14–24 (FSGGQDSTTCL) participates in ATP binding. Positions 192, 201, 204, and 207 each coordinate Zn(2+).

It belongs to the QueC family. In terms of assembly, homodimer. Zn(2+) serves as cofactor.

It catalyses the reaction 7-carboxy-7-deazaguanine + NH4(+) + ATP = 7-cyano-7-deazaguanine + ADP + phosphate + H2O + H(+). It functions in the pathway purine metabolism; 7-cyano-7-deazaguanine biosynthesis. Its function is as follows. Catalyzes the ATP-dependent conversion of 7-carboxy-7-deazaguanine (CDG) to 7-cyano-7-deazaguanine (preQ(0)). This chain is 7-cyano-7-deazaguanine synthase, found in Clostridium acetobutylicum (strain ATCC 824 / DSM 792 / JCM 1419 / IAM 19013 / LMG 5710 / NBRC 13948 / NRRL B-527 / VKM B-1787 / 2291 / W).